Here is a 230-residue protein sequence, read N- to C-terminus: Ropporin-1-like protein (230 aa).

The RIIa domain maps to 17 to 46 (PELPDILKQFTKAAIRTQPADVLRWSAGYF).

The protein belongs to the ropporin family. Component of the axonemal radial spoke complex 1 (RS1), at least composed of spoke head proteins RSPH1, RSPH3, RSPH9 and the cilia-specific component RSPH4A or sperm-specific component RSPH6A, spoke stalk proteins RSPH14, DNAJB13, DYDC1, ROPN1L and NME5, and the anchor protein IQUB. Interacts with FSCB; the interaction increases upon spermatozoa capacitation conditions. May interact with AKAP3. Interacts with CFAP61. Sumoylated, sumoylation decreases upon spermatozoa capacitation conditions.

The protein localises to the cell projection. It localises to the cilium. It is found in the flagellum. In terms of biological role, functions as part of axonemal radial spoke complexes that play an important part in the motility of sperm and cilia. Important for male fertility. With ROPN1, involved in fibrous sheath integrity and sperm motility, plays a role in PKA-dependent signaling processes required for spermatozoa capacitation. The sequence is that of Ropporin-1-like protein (ROPN1L) from Homo sapiens (Human).